Here is a 159-residue protein sequence, read N- to C-terminus: MQKRAIYPGTFDPITNGHLDIVTRATQMFDHVILAIAASPGKKPMFTLDERVALAQKATAHLGNVEVVGFSDLMANFARDRQANILIRGLRAVADFEYEMQLAHMNRHLMPQLESVFLMPSKEWSFISSSLVKEVARHQGDVTHFLPDNVHQALMDKLK.

Thr-10 contacts substrate. Residues 10-11 and His-18 each bind ATP; that span reads TF. The substrate site is built by Lys-42, Met-74, and Arg-88. Residues 89–91, Glu-99, and 124–130 contribute to the ATP site; these read GLR and WSFISSS.

It belongs to the bacterial CoaD family. In terms of assembly, homohexamer. Mg(2+) is required as a cofactor.

The protein resides in the cytoplasm. The enzyme catalyses (R)-4'-phosphopantetheine + ATP + H(+) = 3'-dephospho-CoA + diphosphate. Its pathway is cofactor biosynthesis; coenzyme A biosynthesis; CoA from (R)-pantothenate: step 4/5. Functionally, reversibly transfers an adenylyl group from ATP to 4'-phosphopantetheine, yielding dephospho-CoA (dPCoA) and pyrophosphate. This is Phosphopantetheine adenylyltransferase from Salmonella dublin (strain CT_02021853).